A 265-amino-acid chain; its full sequence is 3-methyl-2-oxobutanoate hydroxymethyltransferase (265 aa).

Residues Asp45 and Asp84 each contribute to the Mg(2+) site. Residues 45–46, Asp84, and Lys114 each bind 3-methyl-2-oxobutanoate; that span reads DS. Position 116 (Glu116) interacts with Mg(2+). The active-site Proton acceptor is the Glu183.

This sequence belongs to the PanB family. As to quaternary structure, homodecamer; pentamer of dimers. Mg(2+) serves as cofactor.

It is found in the cytoplasm. It catalyses the reaction 3-methyl-2-oxobutanoate + (6R)-5,10-methylene-5,6,7,8-tetrahydrofolate + H2O = 2-dehydropantoate + (6S)-5,6,7,8-tetrahydrofolate. It functions in the pathway cofactor biosynthesis; (R)-pantothenate biosynthesis; (R)-pantoate from 3-methyl-2-oxobutanoate: step 1/2. Catalyzes the reversible reaction in which hydroxymethyl group from 5,10-methylenetetrahydrofolate is transferred onto alpha-ketoisovalerate to form ketopantoate. In Salinibacter ruber (strain DSM 13855 / M31), this protein is 3-methyl-2-oxobutanoate hydroxymethyltransferase.